The following is a 94-amino-acid chain: Acylphosphatase (94 aa).

The Acylphosphatase-like domain occupies 3–90; the sequence is RVHVIVEGRV…SDEKQFRIMY (88 aa). Residues Arg18 and Asn36 contribute to the active site.

The protein belongs to the acylphosphatase family.

The enzyme catalyses an acyl phosphate + H2O = a carboxylate + phosphate + H(+). This Geobacillus kaustophilus (strain HTA426) protein is Acylphosphatase (acyP).